Reading from the N-terminus, the 235-residue chain is MSDSTDISGITVDGRLHSMDSGLTERQRTILNVIRASVTSRGYPPSIREIADAVGLTSTSSVAHQLRTLERKGYLRRDPNRPRAVNVRGVEETQAAGPAVLTEVAGSDVLPEPTFVPILGRIAAGSPIFAEGTVEDIFPLPRELVGEGTLFLLKVTGDSMVEAAICDGDWVVVRQQKVADNGDIVAAMIDGEATVKTFKRAGGQVWLIPHNPAFDPIPGNDATVLGKVVTVIRKI.

The segment at residues 47–67 (IREIADAVGLTSTSSVAHQLR) is a DNA-binding region (H-T-H motif). Catalysis depends on for autocatalytic cleavage activity residues Ser159 and Lys196.

Belongs to the peptidase S24 family. As to quaternary structure, homodimer.

The catalysed reaction is Hydrolysis of Ala-|-Gly bond in repressor LexA.. In terms of biological role, represses a number of genes involved in the response to DNA damage (SOS response), including recA and lexA. In the presence of single-stranded DNA, RecA interacts with LexA causing an autocatalytic cleavage which disrupts the DNA-binding part of LexA, leading to derepression of the SOS regulon and eventually DNA repair. The protein is LexA repressor of Mycobacterium leprae (strain Br4923).